The chain runs to 429 residues: Probable M18 family aminopeptidase 2 (429 aa).

His82, His156, and His401 together coordinate Zn(2+).

Belongs to the peptidase M18 family. Requires Zn(2+) as cofactor.

The polypeptide is Probable M18 family aminopeptidase 2 (Pseudomonas fluorescens (strain Pf0-1)).